The chain runs to 166 residues: Vasopressin-neurophysin 2-copeptin (166 aa).

An N-terminal signal peptide occupies residues 1-19; it reads MPDATLPACFLSLLAFTSA. Cys-20 and Cys-25 are joined by a disulfide. Gly-28 is modified (glycine amide). 7 cysteine pairs are disulfide-bonded: Cys-41-Cys-85, Cys-44-Cys-58, Cys-52-Cys-75, Cys-59-Cys-65, Cys-92-Cys-104, Cys-98-Cys-116, and Cys-105-Cys-110. The N-linked (GlcNAc...) asparagine glycan is linked to Asn-133.

This sequence belongs to the vasopressin/oxytocin family. Interacts with vasopressin receptors V1bR/AVPR1B (Ki=85 pM), V1aR/AVPR1A (Ki=0.6 nM) and V2R/AVPR2 (Ki=4.9 nM). Interacts with oxytocin receptor (OXTR) (Ki=110 nM).

The protein localises to the secreted. Its function is as follows. Neurophysin 2 specifically binds vasopressin. Functionally, vasopressin has a direct antidiuretic action on the kidney, it also causes vasoconstriction of the peripheral vessels. Acts by binding to vasopressin receptors (V1bR/AVPR1B, V1aR/AVPR1A, and V2R/AVPR2). The sequence is that of Vasopressin-neurophysin 2-copeptin (AVP) from Bos taurus (Bovine).